The following is a 501-amino-acid chain: Serine/threonine-protein kinase pelle (501 aa).

The tract at residues 1-25 (MSGVQTAEAEAQAQNQANGNRTRSR) is disordered. Residues 7–18 (AEAEAQAQNQAN) show a composition bias toward low complexity. The region spanning 55–121 (WQQLATAVKL…NAMRLIKDYV (67 aa)) is the Death domain. The interval 144-176 (DSSAKVNNGPPFPSSSGVSNSNNNRTSTTATEE) is disordered. The span at 149–167 (VNNGPPFPSSSGVSNSNNN) shows a compositional bias: low complexity. The 287-residue stretch at 213-499 (WSPDNRLGQG…AVLKRFEPFV (287 aa)) folds into the Protein kinase domain. ATP contacts are provided by residues 219-227 (LGQGGFGDV) and Lys-240. Catalysis depends on Asp-346, which acts as the Proton acceptor. Residues 348–351 (KPAN) and Asp-364 contribute to the ATP site.

Belongs to the protein kinase superfamily. TKL Ser/Thr protein kinase family. Pelle subfamily. As to quaternary structure, interacts (via Death domain) with tub (via Death domain). Interacts with Pellino (Pli).

It localises to the cell membrane. Its subcellular location is the cytoplasm. It catalyses the reaction L-seryl-[protein] + ATP = O-phospho-L-seryl-[protein] + ADP + H(+). The enzyme catalyses L-threonyl-[protein] + ATP = O-phospho-L-threonyl-[protein] + ADP + H(+). Functionally, plays an essential role in the Tl receptor signaling pathway that establishes embryonic dorsoventral polarity; the signal directs import of dl into ventral and ventrolateral nuclei, thereby establishing dorsoventral polarity. Tub recruits pll to the plasma membrane and protein-protein interaction activates pll. In Drosophila melanogaster (Fruit fly), this protein is Serine/threonine-protein kinase pelle (pll).